The following is a 417-amino-acid chain: MAEIKNYTLNFGPQHPAAHGVLRLVLELDGEVIQRADPHIGLLHRATEKLAESKTFIQSVPYMDRLDYVSMMVNEHGYVLAIEKLLGIEVPERAQYIRVLFDEITRVLNHLMWIGAHALDVGAMAVFLYAFREREDLMDVYEAVSGARMHAAYYRPGGVYRDLPDAMPQYKASKIRNEKALAKMNEARSGSVLDFIDDFFARFPKCVDEYETLLTDNRIWKQRLVGIGVVSPERALQMGLTGPMLRGSGIAWDLRKKQPYEVYDRMDFDVPVGVNGDCYDRYLVRVEEMRQSIRIAKQCIEWLRKNPGPVMTDNHKVAPPSRVGMKTNMEDLIHHFKLFTEGFHVPEGEAYAAVEHPKGEFGIYLVSDGANKPYRLKIRAPGFAHLASLDEMARGHMIADAVTIIGTQDIVFGEIDR.

The protein belongs to the complex I 49 kDa subunit family. As to quaternary structure, NDH-1 is composed of 14 different subunits. Subunits NuoB, C, D, E, F, and G constitute the peripheral sector of the complex.

The protein localises to the cell inner membrane. It catalyses the reaction a quinone + NADH + 5 H(+)(in) = a quinol + NAD(+) + 4 H(+)(out). NDH-1 shuttles electrons from NADH, via FMN and iron-sulfur (Fe-S) centers, to quinones in the respiratory chain. The immediate electron acceptor for the enzyme in this species is believed to be ubiquinone. Couples the redox reaction to proton translocation (for every two electrons transferred, four hydrogen ions are translocated across the cytoplasmic membrane), and thus conserves the redox energy in a proton gradient. This chain is NADH-quinone oxidoreductase subunit D, found in Burkholderia lata (strain ATCC 17760 / DSM 23089 / LMG 22485 / NCIMB 9086 / R18194 / 383).